The chain runs to 138 residues: Large ribosomal subunit protein bL19 (138 aa).

The protein belongs to the bacterial ribosomal protein bL19 family.

In terms of biological role, this protein is located at the 30S-50S ribosomal subunit interface and may play a role in the structure and function of the aminoacyl-tRNA binding site. In Leptospira interrogans serogroup Icterohaemorrhagiae serovar copenhageni (strain Fiocruz L1-130), this protein is Large ribosomal subunit protein bL19.